The primary structure comprises 596 residues: UDP-glucuronate:xylan alpha-glucuronosyltransferase 2 (596 aa).

A helical; Signal-anchor for type II membrane protein transmembrane segment spans residues 17–37; it reads LIRFNLVLLGFSFLLYTAIFF. D395 and D397 together coordinate Mn(2+). Substrate-binding positions include 395–397, 424–426, 451–455, and 504–509; these read DAD, NSG, NGGDQ, and HYLGWK. A Mn(2+)-binding site is contributed by H504.

It belongs to the glycosyltransferase 8 family. Glycogenin subfamily. The cofactor is Mn(2+).

It localises to the golgi apparatus membrane. Functionally, glycosyltransferase required for the addition of both glucuronic acid and 4-O-methylglucuronic acid branches to xylan in stem cell walls. In association with GUX1, is responsible for almost all of the substitutions of the xylan backbone in stem glucuronoxylan. The chain is UDP-glucuronate:xylan alpha-glucuronosyltransferase 2 (GUX2) from Arabidopsis thaliana (Mouse-ear cress).